Reading from the N-terminus, the 198-residue chain is Large ribosomal subunit protein bL9 (198 aa).

The segment covering 156-166 has biased composition (basic and acidic residues); that stretch reads RGEDISTRQED. The tract at residues 156-198 is disordered; sequence RGEDISTRQEDQDAAAEALAAAGEFFDPEAHNDGEQEEEAGDK.

The protein belongs to the bacterial ribosomal protein bL9 family.

In terms of biological role, binds to the 23S rRNA. The polypeptide is Large ribosomal subunit protein bL9 (Rhodopseudomonas palustris (strain BisB18)).